The chain runs to 219 residues: uncharacterized protein (219 aa).

A signal peptide spans 1–17 (MFKKIIILFLGIFLLSS). A lipid anchor (N-palmitoyl cysteine) is attached at Cys-18. A lipid anchor (S-diacylglycerol cysteine) is attached at Cys-18. The disordered stretch occupies residues 110–136 (KAESNATQSNNDMTLSKANKKVRKDDS). The segment covering 112-126 (ESNATQSNNDMTLSK) has biased composition (polar residues). Residues 137-165 (YKEKKIEEELNQIKAMLRETKRDITKYTC) adopt a coiled-coil conformation.

It is found in the cell membrane. This is an uncharacterized protein from Rickettsia prowazekii (strain Madrid E).